The sequence spans 179 residues: Probable galaptin lec-7 (179 aa).

Positions 11–138 (SVYQIEENLK…SVDIESIVFK (128 aa)) constitute a Galectin domain.

This is Probable galaptin lec-7 (lec-7) from Caenorhabditis elegans.